We begin with the raw amino-acid sequence, 954 residues long: Glycine dehydrogenase (decarboxylating) (954 aa).

Residue Lys-699 is modified to N6-(pyridoxal phosphate)lysine.

It belongs to the GcvP family. In terms of assembly, the glycine cleavage system is composed of four proteins: P, T, L and H. It depends on pyridoxal 5'-phosphate as a cofactor.

It carries out the reaction N(6)-[(R)-lipoyl]-L-lysyl-[glycine-cleavage complex H protein] + glycine + H(+) = N(6)-[(R)-S(8)-aminomethyldihydrolipoyl]-L-lysyl-[glycine-cleavage complex H protein] + CO2. The glycine cleavage system catalyzes the degradation of glycine. The P protein binds the alpha-amino group of glycine through its pyridoxal phosphate cofactor; CO(2) is released and the remaining methylamine moiety is then transferred to the lipoamide cofactor of the H protein. The chain is Glycine dehydrogenase (decarboxylating) from Nitrobacter winogradskyi (strain ATCC 25391 / DSM 10237 / CIP 104748 / NCIMB 11846 / Nb-255).